Reading from the N-terminus, the 291-residue chain is Putative transport permease ycf38 (291 aa).

Helical transmembrane passes span 47 to 67 (ATLMAGIIQPLLWLVLFGGLF), 87 to 107 (SGIIVFTSFTGALNSGLPLMF), 135 to 155 (FMTCLSLIQVIFIVIASLFMG), 165 to 185 (LIFALIVLLVTVGVTMLSLAL), 195 to 215 (LLALILVVNLPFLFSSTALAP), and 262 to 282 (ISLGQIISLLLFLDVIGAYIV). In terms of domain architecture, ABC transmembrane type-2 spans 47–289 (ATLMAGIIQP…YIVSNILKAR (243 aa)).

It belongs to the ABC-2 integral membrane protein family.

The protein resides in the plastid. The protein localises to the chloroplast membrane. This chain is Putative transport permease ycf38 (ycf38), found in Porphyra purpurea (Red seaweed).